The primary structure comprises 182 residues: ATP synthase subunit delta (182 aa).

It belongs to the ATPase delta chain family. As to quaternary structure, F-type ATPases have 2 components, F(1) - the catalytic core - and F(0) - the membrane proton channel. F(1) has five subunits: alpha(3), beta(3), gamma(1), delta(1), epsilon(1). F(0) has three main subunits: a(1), b(2) and c(10-14). The alpha and beta chains form an alternating ring which encloses part of the gamma chain. F(1) is attached to F(0) by a central stalk formed by the gamma and epsilon chains, while a peripheral stalk is formed by the delta and b chains.

It is found in the cell inner membrane. In terms of biological role, f(1)F(0) ATP synthase produces ATP from ADP in the presence of a proton or sodium gradient. F-type ATPases consist of two structural domains, F(1) containing the extramembraneous catalytic core and F(0) containing the membrane proton channel, linked together by a central stalk and a peripheral stalk. During catalysis, ATP synthesis in the catalytic domain of F(1) is coupled via a rotary mechanism of the central stalk subunits to proton translocation. Its function is as follows. This protein is part of the stalk that links CF(0) to CF(1). It either transmits conformational changes from CF(0) to CF(1) or is implicated in proton conduction. This is ATP synthase subunit delta from Persephonella marina (strain DSM 14350 / EX-H1).